A 295-amino-acid chain; its full sequence is N-acetylmuramic acid 6-phosphate etherase (295 aa).

The region spanning 55–218 is the SIS domain; the sequence is AADALKQGGR…STGAMVKLGK (164 aa). Glu83 functions as the Proton donor in the catalytic mechanism. Residue Glu114 is part of the active site.

It belongs to the GCKR-like family. MurNAc-6-P etherase subfamily. As to quaternary structure, homodimer.

The enzyme catalyses N-acetyl-D-muramate 6-phosphate + H2O = N-acetyl-D-glucosamine 6-phosphate + (R)-lactate. Its pathway is amino-sugar metabolism; 1,6-anhydro-N-acetylmuramate degradation. It functions in the pathway amino-sugar metabolism; N-acetylmuramate degradation. It participates in cell wall biogenesis; peptidoglycan recycling. In terms of biological role, specifically catalyzes the cleavage of the D-lactyl ether substituent of MurNAc 6-phosphate, producing GlcNAc 6-phosphate and D-lactate. Together with AnmK, is also required for the utilization of anhydro-N-acetylmuramic acid (anhMurNAc) either imported from the medium or derived from its own cell wall murein, and thus plays a role in cell wall recycling. This is N-acetylmuramic acid 6-phosphate etherase from Yersinia pseudotuberculosis serotype O:1b (strain IP 31758).